Consider the following 242-residue polypeptide: LexA repressor (242 aa).

Residues 26 to 46 constitute a DNA-binding region (H-T-H motif); sequence FEEMKAALNLKSKSGIHRLIS. Active-site for autocatalytic cleavage activity residues include Ser-163 and Lys-201.

It belongs to the peptidase S24 family. In terms of assembly, homodimer.

The catalysed reaction is Hydrolysis of Ala-|-Gly bond in repressor LexA.. Functionally, represses a number of genes involved in the response to DNA damage (SOS response), including recA and lexA. In the presence of single-stranded DNA, RecA interacts with LexA causing an autocatalytic cleavage which disrupts the DNA-binding part of LexA, leading to derepression of the SOS regulon and eventually DNA repair. This is LexA repressor from Granulibacter bethesdensis (strain ATCC BAA-1260 / CGDNIH1).